The primary structure comprises 312 residues: MDLTSMAMQETTAAAEEDRLPCSEVPVKEKTKKITWVRKWNSTDVFHILFIGGLHVLCLFAPSTFSWKSFWVCFALYAICGVFGTTLSFHRNLTHRSFKLPKYLEYFFAYVGLHALQGDPVWWVSTHRYHHKYTDTYLDPHSPIEGFWFCHIFWLFDSKYIIEKCGRYENAGDLMKQSYYRFLERTFVYHVYLQAALLYLFGGFPFIVWGMAVRTILGFHLSWLVNSVCHRWGNRPWNTGDLSTNNWFIAMLTSGEGWHNNHHAFEYSARHGIEWWQIDTTWYIIKLLEYLGLATDIKVPSEIHKRKMSFKN.

2 consecutive transmembrane segments (helical) span residues 45-65 (VFHI…PSTF) and 69-89 (SFWV…TLSF). His90, His95, His127, His130, and His131 together coordinate Fe cation. The Histidine box-1 signature appears at 90–95 (HRNLTH). The Histidine box-2 signature appears at 127 to 131 (HRYHH). Residues 193 to 213 (LQAALLYLFGGFPFIVWGMAV) traverse the membrane as a helical segment. 4 residues coordinate Fe cation: His230, His259, His262, and His263. The Histidine box-3 motif lies at 259-263 (HNNHH).

The protein belongs to the fatty acid desaturase type 1 family. Requires Fe(2+) as cofactor.

It localises to the membrane. It carries out the reaction (11Z,14Z)-eicosadienoyl-CoA + AH2 + O2 = (5Z,11Z,14Z)-eicosatrienoyl-CoA + A + 2 H2O. The catalysed reaction is (11Z,14Z,17Z)-eicosatrienoyl-CoA + AH2 + O2 = (5Z,11Z,14Z,17Z)-eicosatetraenoyl-CoA + A + 2 H2O. It participates in lipid metabolism; polyunsaturated fatty acid biosynthesis. Catalyzes the desaturation of 20:2Delta(11,14) and 20:3Delta(11,14,17) to generate sciadonic acid (20:3Delta(5,11,14)) and juniperonic acid (20:4Delta(5,11,14,17)). This Anemone leveillei (Windflower) protein is Acyl-CoA C20 Delta5-desaturase.